The primary structure comprises 212 residues: uncharacterized protein (212 aa).

This is an uncharacterized protein from Saccharolobus islandicus (Sulfolobus islandicus).